The primary structure comprises 332 residues: D-lactate dehydrogenase (332 aa).

Residues 155–156, Asp175, 206–207, Asn212, and 233–235 contribute to the NAD(+) site; these read RI, VP, and FAR. Residues Arg235 and Glu264 contribute to the active site. His296 (proton donor) is an active-site residue.

This sequence belongs to the D-isomer specific 2-hydroxyacid dehydrogenase family. As to quaternary structure, homodimer.

The enzyme catalyses (R)-lactate + NAD(+) = pyruvate + NADH + H(+). The sequence is that of D-lactate dehydrogenase from Lactiplantibacillus pentosus (Lactobacillus pentosus).